Consider the following 367-residue polypeptide: Aurora kinase (367 aa).

Composition is skewed to polar residues over residues 1-29 and 37-48; these read MQRN…TSRI and HSPQQRNPNSKI. Residues 1–52 are disordered; it reads MQRNSLVNIKLNANSPSKKTTTRPNTSRINKPWRISHSPQQRNPNSKIPSPV. Ser5 is subject to Phosphoserine; by autocatalysis. The residue at position 76 (Ser76) is a Phosphoserine. Positions 104-355 constitute a Protein kinase domain; the sequence is FELGKKLGKG…LGDVKMHPWI (252 aa). ATP is bound by residues 110–118 and Lys133; that span reads LGKGKFGKV. The active-site Proton acceptor is Asp227. Thr260 carries the post-translational modification Phosphothreonine; by autocatalysis.

It belongs to the protein kinase superfamily. Ser/Thr protein kinase family. Aurora subfamily. As to quaternary structure, component of the CPC complex at least composed of IPL1, BIR1 and SLI15.

The protein localises to the nucleus. Its subcellular location is the cytoplasm. It localises to the cytoskeleton. The protein resides in the spindle. It is found in the chromosome. The protein localises to the centromere. Its subcellular location is the kinetochore. It catalyses the reaction L-seryl-[protein] + ATP = O-phospho-L-seryl-[protein] + ADP + H(+). The enzyme catalyses L-threonyl-[protein] + ATP = O-phospho-L-threonyl-[protein] + ADP + H(+). Functionally, component of the chromosomal passenger complex (CPC), a complex that acts as a key regulator of chromosome segregation and cytokinesis. Has a role in error-correction of aberrent kinetochore-microtubule attachments to ensure that sister kinetochores become bioriented and connect to opposite poles by promoting spindle assembly checkpoint signaling. Acts in opposition to the phosphatase PP1. Not required for kinetochore detachment from microtubules during replication of centromeric DNA. Phosphorylates histone H3 to form H3S10ph during mitosis and meiosis. Phosphorylates CNN1, which contributes to the enrichment of CNN1 on anaphase kinetochores. Phosphorylates RGD1. The chain is Aurora kinase (IPL1) from Saccharomyces cerevisiae (strain ATCC 204508 / S288c) (Baker's yeast).